Reading from the N-terminus, the 179-residue chain is Large ribosomal subunit protein uL5 (179 aa).

This sequence belongs to the universal ribosomal protein uL5 family. Part of the 50S ribosomal subunit; part of the 5S rRNA/L5/L18/L25 subcomplex. Contacts the 5S rRNA and the P site tRNA. Forms a bridge to the 30S subunit in the 70S ribosome.

Its function is as follows. This is one of the proteins that bind and probably mediate the attachment of the 5S RNA into the large ribosomal subunit, where it forms part of the central protuberance. In the 70S ribosome it contacts protein S13 of the 30S subunit (bridge B1b), connecting the 2 subunits; this bridge is implicated in subunit movement. Contacts the P site tRNA; the 5S rRNA and some of its associated proteins might help stabilize positioning of ribosome-bound tRNAs. The protein is Large ribosomal subunit protein uL5 of Exiguobacterium sibiricum (strain DSM 17290 / CCUG 55495 / CIP 109462 / JCM 13490 / 255-15).